The sequence spans 80 residues: GSQFGKGKGQLIGVGAGALLGAILGNQIGAGMDEQDRRLAELTSQRALETTPSGTSIEWRNPDNGNYGYVTPSKTYKNST.

Residues 47-58 (ALETTPSGTSIE) show a composition bias toward polar residues. Residues 47–80 (ALETTPSGTSIEWRNPDNGNYGYVTPSKTYKNST) form a disordered region.

This sequence belongs to the rickettsiale 17 kDa surface antigen family.

Its subcellular location is the cell outer membrane. This is 17 kDa surface antigen (omp) from Rickettsia canadensis.